Here is a 289-residue protein sequence, read N- to C-terminus: Formamidopyrimidine-DNA glycosylase (289 aa).

Proline 2 acts as the Schiff-base intermediate with DNA in catalysis. Glutamate 3 serves as the catalytic Proton donor. Catalysis depends on lysine 61, which acts as the Proton donor; for beta-elimination activity. Residues histidine 96, arginine 115, and lysine 161 each contribute to the DNA site. The segment at 247 to 281 (SAYGQEDRPCPRCGTAIRREKFMNRSSFSCPKCQR) adopts an FPG-type zinc-finger fold. Arginine 271 (proton donor; for delta-elimination activity) is an active-site residue.

The protein belongs to the FPG family. In terms of assembly, monomer. It depends on Zn(2+) as a cofactor.

It catalyses the reaction Hydrolysis of DNA containing ring-opened 7-methylguanine residues, releasing 2,6-diamino-4-hydroxy-5-(N-methyl)formamidopyrimidine.. The enzyme catalyses 2'-deoxyribonucleotide-(2'-deoxyribose 5'-phosphate)-2'-deoxyribonucleotide-DNA = a 3'-end 2'-deoxyribonucleotide-(2,3-dehydro-2,3-deoxyribose 5'-phosphate)-DNA + a 5'-end 5'-phospho-2'-deoxyribonucleoside-DNA + H(+). In terms of biological role, involved in base excision repair of DNA damaged by oxidation or by mutagenic agents. Acts as a DNA glycosylase that recognizes and removes damaged bases. Has a preference for oxidized purines, such as 7,8-dihydro-8-oxoguanine (8-oxoG). Has AP (apurinic/apyrimidinic) lyase activity and introduces nicks in the DNA strand. Cleaves the DNA backbone by beta-delta elimination to generate a single-strand break at the site of the removed base with both 3'- and 5'-phosphates. The protein is Formamidopyrimidine-DNA glycosylase of Rhodococcus opacus (strain B4).